A 62-amino-acid polypeptide reads, in one-letter code: Statherin (62 aa).

The signal sequence occupies residues 1 to 19 (MKFLVFAFILALMVSMIGA). A hydroxyapatite-binding; inhibits crystal growth region spans residues 20-25 (DSSEEK). Phosphoserine is present on residues serine 21 and serine 22. A cross-link (isoglutamyl lysine isopeptide (Lys-Gln); in form cyclo-statherin Q-37) is located at residues 25–56 (KFLRRIGRFGYGYGPYQPVPEQPLYPQPYQPQ). Residues 25–58 (KFLRRIGRFGYGYGPYQPVPEQPLYPQPYQPQYQ) constitute a cross-link (isoglutamyl lysine isopeptide (Lys-Gln); in form cyclo-statherin Q-39). Residues 38-62 (GPYQPVPEQPLYPQPYQPQYQQYTF) form a hydrophobic; inhibits precipitation of calcium phosphate salts region.

It belongs to the histatin/statherin family. In terms of processing, substrate for transglutaminase-2. More than 95% of the cyclized peptide is cyclo-statherin Q-37, and less than 5% is cyclo-statherin Q-39. Cyclized forms account for about 1% of total statherin in saliva. Sulfated on tyrosine residues. Secreted by parotid and submandibular glands.

The protein localises to the secreted. Salivary protein that stabilizes saliva supersaturated with calcium salts by inhibiting the precipitation of calcium phosphate salts. It also modulates hydroxyapatite crystal formation on the tooth surface. The protein is Statherin (STATH) of Homo sapiens (Human).